The sequence spans 1108 residues: DNA-directed RNA polymerase subunit beta (1108 aa).

Belongs to the RNA polymerase beta chain family. As to quaternary structure, in plastids the minimal PEP RNA polymerase catalytic core is composed of four subunits: alpha, beta, beta', and beta''. When a (nuclear-encoded) sigma factor is associated with the core the holoenzyme is formed, which can initiate transcription.

It is found in the plastid. It localises to the chloroplast. It carries out the reaction RNA(n) + a ribonucleoside 5'-triphosphate = RNA(n+1) + diphosphate. Its function is as follows. DNA-dependent RNA polymerase catalyzes the transcription of DNA into RNA using the four ribonucleoside triphosphates as substrates. This chain is DNA-directed RNA polymerase subunit beta, found in Gnetum parvifolium (Small-leaved jointfir).